Reading from the N-terminus, the 94-residue chain is Small ribosomal subunit protein uS19c (94 aa).

It belongs to the universal ribosomal protein uS19 family.

It localises to the plastid. The protein resides in the chloroplast. Its function is as follows. Protein S19 forms a complex with S13 that binds strongly to the 16S ribosomal RNA. The protein is Small ribosomal subunit protein uS19c of Pleurastrum terricola (Filamentous green alga).